Reading from the N-terminus, the 144-residue chain is Large ribosomal subunit protein uL15 (144 aa).

The interval 1–52 is disordered; that stretch reads MKLHTLKSTPGARVEKHRVGRGHAAGKGKQAGKGQSGQNKRHGHRLGFEGGQ. Residues 15–26 show a composition bias toward basic residues; that stretch reads EKHRVGRGHAAG.

Belongs to the universal ribosomal protein uL15 family. Part of the 50S ribosomal subunit.

Binds to the 23S rRNA. In Mycoplasmopsis agalactiae (strain NCTC 10123 / CIP 59.7 / PG2) (Mycoplasma agalactiae), this protein is Large ribosomal subunit protein uL15.